We begin with the raw amino-acid sequence, 168 residues long: MLSKIERLILANQYKILKILENTSEYDEIIKILEEGYEIFYDEILGHIFDELPESEGQFVLDILSFYDIVVEPYKQKNPNDHEIINHPYSYFKGFDGNSETKYMAFVRFLIEDQKKFSFVAKYAKKTDNFNSHFPMLDKYRKMVELWESKYNKKYDLKREEILDILNA.

It belongs to the UPF0304 family.

The polypeptide is UPF0304 protein MJECS11 (Methanocaldococcus jannaschii (strain ATCC 43067 / DSM 2661 / JAL-1 / JCM 10045 / NBRC 100440) (Methanococcus jannaschii)).